A 300-amino-acid chain; its full sequence is Energy-coupling factor transporter ATP-binding protein EcfA2 (300 aa).

Residues 3–258 (IKAKNIVKIY…NKFLIENKML (256 aa)) enclose the ABC transporter domain. 40-47 (GQTGSGKT) serves as a coordination point for ATP.

This sequence belongs to the ABC transporter superfamily. Energy-coupling factor EcfA family. Forms a stable energy-coupling factor (ECF) transporter complex composed of 2 membrane-embedded substrate-binding proteins (S component), 2 ATP-binding proteins (A component) and 2 transmembrane proteins (T component).

It is found in the cell membrane. ATP-binding (A) component of a common energy-coupling factor (ECF) ABC-transporter complex. Unlike classic ABC transporters this ECF transporter provides the energy necessary to transport a number of different substrates. The polypeptide is Energy-coupling factor transporter ATP-binding protein EcfA2 (Mesomycoplasma hyopneumoniae (strain 232) (Mycoplasma hyopneumoniae)).